A 120-amino-acid polypeptide reads, in one-letter code: Ribonuclease P protein component (120 aa).

It belongs to the RnpA family. In terms of assembly, consists of a catalytic RNA component (M1 or rnpB) and a protein subunit.

It catalyses the reaction Endonucleolytic cleavage of RNA, removing 5'-extranucleotides from tRNA precursor.. RNaseP catalyzes the removal of the 5'-leader sequence from pre-tRNA to produce the mature 5'-terminus. It can also cleave other RNA substrates such as 4.5S RNA. The protein component plays an auxiliary but essential role in vivo by binding to the 5'-leader sequence and broadening the substrate specificity of the ribozyme. In Azoarcus sp. (strain BH72), this protein is Ribonuclease P protein component.